The following is a 49-amino-acid chain: Large ribosomal subunit protein bL33D (49 aa).

Belongs to the bacterial ribosomal protein bL33 family.

This Enterococcus faecalis (strain ATCC 700802 / V583) protein is Large ribosomal subunit protein bL33D (rpmG4).